The sequence spans 159 residues: Regulator of G-protein signaling 13 (159 aa).

Residues 34 to 150 enclose the RGS domain; that stretch reads SFENLMATKY…LKSEMYQKLL (117 aa).

In terms of biological role, inhibits signal transduction by increasing the GTPase activity of G protein alpha subunits thereby driving them into their inactive GDP-bound form. Binds to both G(i)-alpha and G(q)-alpha. The sequence is that of Regulator of G-protein signaling 13 (RGS13) from Homo sapiens (Human).